The primary structure comprises 124 residues: MATINQLVRKPRVKLVDKNNVPALQECPQKRGVCTRVYTTTPKKPNSAMRKVARTRLTNKYEVTAYIGGEGHNLQEHSLVLIRGGRVKDLPGVRYHIVRGALDTAGVKDRKKGRSKYGAKRPKA.

Asp-89 is subject to 3-methylthioaspartic acid. The tract at residues 105-124 is disordered; it reads AGVKDRKKGRSKYGAKRPKA. Over residues 109–124 the composition is skewed to basic residues; sequence DRKKGRSKYGAKRPKA.

Belongs to the universal ribosomal protein uS12 family. In terms of assembly, part of the 30S ribosomal subunit. Contacts proteins S8 and S17. May interact with IF1 in the 30S initiation complex.

Functionally, with S4 and S5 plays an important role in translational accuracy. In terms of biological role, interacts with and stabilizes bases of the 16S rRNA that are involved in tRNA selection in the A site and with the mRNA backbone. Located at the interface of the 30S and 50S subunits, it traverses the body of the 30S subunit contacting proteins on the other side and probably holding the rRNA structure together. The combined cluster of proteins S8, S12 and S17 appears to hold together the shoulder and platform of the 30S subunit. This is Small ribosomal subunit protein uS12 from Dichelobacter nodosus (strain VCS1703A).